The primary structure comprises 106 residues: MNDSEFHRLADALWLTIEERLDSWDGDSDIDCEINGGVLTLSFENGSKIIINRQEPLHQVWLATKQGGYHFDLKGDEWVCDRSGETFWDLLEQAATQQAGEKVSFR.

Belongs to the frataxin family.

Its function is as follows. Involved in iron-sulfur (Fe-S) cluster assembly. May act as a regulator of Fe-S biogenesis. The polypeptide is Iron-sulfur cluster assembly protein CyaY (Salmonella typhimurium (strain LT2 / SGSC1412 / ATCC 700720)).